The following is a 392-amino-acid chain: Cell division protein FtsZ (392 aa).

GTP-binding positions include 24 to 28 (GGGCN), 111 to 113 (GTG), glutamate 142, arginine 145, and aspartate 189.

This sequence belongs to the FtsZ family. Homodimer. Polymerizes to form a dynamic ring structure in a strictly GTP-dependent manner. Interacts directly with several other division proteins.

The protein resides in the cytoplasm. Its function is as follows. Essential cell division protein that forms a contractile ring structure (Z ring) at the future cell division site. The regulation of the ring assembly controls the timing and the location of cell division. One of the functions of the FtsZ ring is to recruit other cell division proteins to the septum to produce a new cell wall between the dividing cells. Binds GTP and shows GTPase activity. This chain is Cell division protein FtsZ, found in Neisseria meningitidis serogroup A / serotype 4A (strain DSM 15465 / Z2491).